A 219-amino-acid polypeptide reads, in one-letter code: Ras-related protein Rab-32A (219 aa).

A GTP-binding site is contributed by 22–29 (GDIGTGKT). Positions 44–52 (YKSTIGVDF) match the Effector region motif. Residues 71–75 (DIAGQ) and 134–137 (NKCD) contribute to the GTP site. The interval 192-219 (NQPIEGTIQPGDLNKQPQPTSTGPSCCK) is disordered. Over residues 206 to 219 (KQPQPTSTGPSCCK) the composition is skewed to polar residues. S-geranylgeranyl cysteine attachment occurs at residues cysteine 217 and cysteine 218.

It belongs to the small GTPase superfamily. Rab family.

The sequence is that of Ras-related protein Rab-32A (rab32A) from Dictyostelium discoideum (Social amoeba).